A 195-amino-acid polypeptide reads, in one-letter code: Cysteine/O-acetylserine efflux protein (195 aa).

Topologically, residues 1-7 (MTPTLLS) are periplasmic. Residues 8-28 (AFWTYTLITAMTPGPNNILAL) form a helical membrane-spanning segment. Residues 29 to 46 (SSATSHGFRQSTRVLAGM) are Cytoplasmic-facing. The chain crosses the membrane as a helical span at residues 47 to 67 (SLGFLIVMLLCAGISFSLAVI). Over 68–69 (DP) the chain is Periplasmic. The chain crosses the membrane as a helical span at residues 70–90 (AAVHLLSWAGAAYIVWLAWKI). Topologically, residues 91 to 104 (ATSPTKEDGLQTKP) are cytoplasmic. The helical transmembrane segment at 105–125 (ISFWASFALQFVNVKIILYGV) threads the bilayer. Residues 126-141 (TALSTFVLPQTQALSW) lie on the Periplasmic side of the membrane. Residues 142 to 162 (VVGVSVLLAMIGTFGNVCWAL) traverse the membrane as a helical segment. Residues 163–176 (AGHLFQRLFRQYGR) are Cytoplasmic-facing. Residues 177-194 (QLNIVLALLLVYCAVRIF) traverse the membrane as a helical segment. Position 195 (Tyr-195) is a topological domain, periplasmic.

The protein belongs to the Rht family.

It is found in the cell inner membrane. The enzyme catalyses O-acetyl-L-serine(in) = O-acetyl-L-serine(out). It catalyses the reaction L-cysteine(in) = L-cysteine(out). Its function is as follows. Exporter of O-acetylserine (OAS) and cysteine. In Escherichia coli O1:K1 / APEC, this protein is Cysteine/O-acetylserine efflux protein (eamB).